Here is a 678-residue protein sequence, read N- to C-terminus: Protein CASP (678 aa).

Over 1 to 619 the chain is Cytoplasmic; the sequence is MAANVGSMFQ…LVLSNKMART (619 aa). Coiled coils occupy residues 67 to 450 and 502 to 556; these read LLKS…QDLS and LSII…FLQS. Serine 586 carries the post-translational modification Phosphoserine. A helical; Anchor for type IV membrane protein membrane pass occupies residues 620–640; that stretch reads IGFFYTLFLHCLVFLVLYKLA. Residues 641-678 are Lumenal-facing; it reads WSESMERDCATFCAKKFADHLHKFHENDNGAAAGDLWQ.

The protein belongs to the CASP family. In terms of assembly, homodimer; disulfide-linked. Interacts with GOLGA5.

The protein resides in the golgi apparatus membrane. May be involved in intra-Golgi retrograde transport. In Homo sapiens (Human), this protein is Protein CASP (CUX1).